Here is a 193-residue protein sequence, read N- to C-terminus: Thymidine kinase (193 aa).

ATP-binding positions include 14–21 (GCMFSGKT) and 87–90 (DELH). Glutamate 88 acts as the Proton acceptor in catalysis. Zn(2+) is bound by residues cysteine 147, cysteine 150, cysteine 185, and cysteine 188.

This sequence belongs to the thymidine kinase family. As to quaternary structure, homotetramer.

It localises to the cytoplasm. It carries out the reaction thymidine + ATP = dTMP + ADP + H(+). The sequence is that of Thymidine kinase from Roseiflexus sp. (strain RS-1).